Here is a 575-residue protein sequence, read N- to C-terminus: Kelch repeat and BTB domain-containing protein 8 (575 aa).

The BTB domain occupies 23-91 (TDIVVEVDHG…AYTSRVILTE (69 aa)). The BACK domain maps to 126–228 (SIGVFIFADH…MEDAFIEKIP (103 aa)). Kelch repeat units follow at residues 310–364 (DIYI…YCCG), 365–415 (KMYA…EHKE), 417–455 (IYVLQGEFFLFYEPQKDYWGFLTPMTVPRIQGLAAVYKD), 457–506 (IYYI…LFQN), and 516–562 (QVTV…FECA).

The protein belongs to the KBTBD8 family. Component of the BCR(KBTBD8) E3 ubiquitin ligase complex, at least composed of CUL3, KBTBD8 and RBX1.

It localises to the cytoplasm. The protein resides in the cytoskeleton. It is found in the spindle. Its subcellular location is the golgi apparatus. In terms of biological role, substrate-specific adapter of a BCR (BTB-CUL3-RBX1) E3 ubiquitin ligase complex that acts as a regulator of neural crest specification. The BCR(KBTBD8) complex acts by mediating monoubiquitination of NOLC1 and TCOF1: monoubiquitination promotes the formation of a NOLC1-TCOF1 complex that acts as a platform to connect RNA polymerase I with enzymes responsible for ribosomal processing and modification, leading to remodel the translational program of differentiating cells in favor of neural crest specification. This chain is Kelch repeat and BTB domain-containing protein 8, found in Rattus norvegicus (Rat).